The primary structure comprises 144 residues: Nucleoside diphosphate kinase (144 aa).

6 residues coordinate ATP: K11, F59, R87, T93, R104, and N114. The active-site Pros-phosphohistidine intermediate is the H117.

It belongs to the NDK family. As to quaternary structure, homotetramer. It depends on Mg(2+) as a cofactor.

It is found in the cytoplasm. The enzyme catalyses a 2'-deoxyribonucleoside 5'-diphosphate + ATP = a 2'-deoxyribonucleoside 5'-triphosphate + ADP. The catalysed reaction is a ribonucleoside 5'-diphosphate + ATP = a ribonucleoside 5'-triphosphate + ADP. Major role in the synthesis of nucleoside triphosphates other than ATP. The ATP gamma phosphate is transferred to the NDP beta phosphate via a ping-pong mechanism, using a phosphorylated active-site intermediate. The polypeptide is Nucleoside diphosphate kinase (Aliivibrio fischeri (strain ATCC 700601 / ES114) (Vibrio fischeri)).